We begin with the raw amino-acid sequence, 124 residues long: uncharacterized protein (124 aa).

Over residues 62–72 (KKNKKQTFLKH) the composition is skewed to basic residues. The segment at 62 to 86 (KKNKKQTFLKHHQSDDHSENKVYKS) is disordered. Positions 73 to 83 (HQSDDHSENKV) are enriched in basic and acidic residues. Positions 80-112 (ENKVYKSKKLEKKIQQLNKKKQLIDTKINFLKE) form a coiled coil.

This is an uncharacterized protein from Dictyostelium discoideum (Social amoeba).